Reading from the N-terminus, the 139-residue chain is Mannose-specific lectin (139 aa).

Residues 1 to 109 (DNILYSGETL…ARWATGTNIH (109 aa)) enclose the Bulb-type lectin domain. 22 residues coordinate alpha-D-mannopyranose: Gln26, Asp28, Asn30, Tyr34, Asp37, Lys38, Trp41, Ala42, Asn44, Gln57, Asp59, Asn61, Tyr65, Ile72, Trp73, Asn76, Asn83, Gln89, Asp91, Asn93, Tyr97, and Trp102. Cysteines 29 and 52 form a disulfide.

Homotetramer; antiparallel. As to expression, detected in bulbs (at protein level).

The protein resides in the secreted. Functionally, mannose-specific lectin. Displays antiviral activity and therefore may contribute to defense against infections. Shows agglutinating activity towards rabbit erythrocytes. The sequence is that of Mannose-specific lectin from Narcissus tazetta (Cream narcissus).